A 536-amino-acid polypeptide reads, in one-letter code: Organic anion transporter 3 (536 aa).

Topologically, residues 1 to 11 (MTFSEILDRVG) are cytoplasmic. The residue at position 4 (S4) is a Phosphoserine. A helical membrane pass occupies residues 12-32 (SMGPFQYLHVTLLALPVLGIA). Over 33 to 123 (NHNLLQIFTA…LVCSSNKLKE (91 aa)) the chain is Extracellular. N81 and N86 each carry an N-linked (GlcNAc...) asparagine glycan. Residues 124–144 (MAQSIFMAGILVGGPVIGELS) traverse the membrane as a helical segment. Topologically, residues 145–158 (DRFGRKPILTWSYL) are cytoplasmic. The helical transmembrane segment at 159–179 (MLAASGSGAAFSPSLPVYMIF) threads the bilayer. Residue R180 is a topological domain, extracellular. A helical membrane pass occupies residues 181–201 (FLCGCSISGISLSTVILNVEW). Residues 202 to 212 (VPTSMRAISST) are Cytoplasmic-facing. The chain crosses the membrane as a helical span at residues 213-233 (SIGYCYTIGQFILSGLAYAIP). Over 234–236 (QWR) the chain is Extracellular. The chain crosses the membrane as a helical span at residues 237–257 (WLQLTSSAPFFIFSLLSWWVP). Residues 258 to 327 (ESIRWLVLSG…FRVSILRRVT (70 aa)) lie on the Cytoplasmic side of the membrane. A helical transmembrane segment spans residues 328-348 (FCLSLAWFSTGFAYYSLAMGV). The Extracellular segment spans residues 349–354 (EEFGVN). Residues 355 to 375 (IYILQIIFGGVDIPAKFITIL) form a helical membrane-spanning segment. Topologically, residues 376–383 (SLSYLGRR) are cytoplasmic. A helical transmembrane segment spans residues 384-404 (ITQSFLLLLAGGAILALIFVP). Residues 405 to 411 (SEMQLLR) are Extracellular-facing. The helical transmembrane segment at 412–432 (TALAVFGKGCLSGSFSCLFLY) threads the bilayer. The Cytoplasmic segment spans residues 433 to 471 (TSELYPTVLRQTGMGISNVWARVGSMIAPLVKITGELQP). The helical transmembrane segment at 472-492 (FIPNVIFGTTALLGGSAAFFL) threads the bilayer. Residues 493 to 536 (LETLNRPLPETIEDIQNWHKQVQKTKQESEAEKASQIIPLKTGG) lie on the Extracellular side of the membrane. The tract at residues 515–536 (QKTKQESEAEKASQIIPLKTGG) is disordered.

This sequence belongs to the major facilitator (TC 2.A.1) superfamily. Organic cation transporter (TC 2.A.1.19) family. In terms of tissue distribution, expressed in the liver, brain, kidney, choroid plexus and weakly in the eye. Moderately expressed (at protein level) in the brain capillary endothelial cells (BCEC).

It localises to the basolateral cell membrane. It catalyses the reaction estrone 3-sulfate(out) + glutarate(in) = estrone 3-sulfate(in) + glutarate(out). The enzyme catalyses estrone 3-sulfate(in) + 2-oxoglutarate(out) = estrone 3-sulfate(out) + 2-oxoglutarate(in). The catalysed reaction is glutarate(in) + 2-oxoglutarate(out) = glutarate(out) + 2-oxoglutarate(in). It carries out the reaction urate(in) + 2-oxoglutarate(out) = urate(out) + 2-oxoglutarate(in). It catalyses the reaction taurocholate(out) + glutarate(in) = taurocholate(in) + glutarate(out). The enzyme catalyses dehydroepiandrosterone 3-sulfate(out) + glutarate(in) = dehydroepiandrosterone 3-sulfate(in) + glutarate(out). The catalysed reaction is prostaglandin F2alpha(out) + glutarate(in) = prostaglandin F2alpha(in) + glutarate(out). It carries out the reaction prostaglandin F2alpha(out) + 2-oxoglutarate(in) = prostaglandin F2alpha(in) + 2-oxoglutarate(out). It catalyses the reaction (R)-carnitine(out) + 2-oxoglutarate(in) = (R)-carnitine(in) + 2-oxoglutarate(out). The enzyme catalyses glutarate(in) + (R)-carnitine(out) = glutarate(out) + (R)-carnitine(in). The catalysed reaction is prostaglandin E2(out) + 2-oxoglutarate(in) = prostaglandin E2(in) + 2-oxoglutarate(out). It carries out the reaction prostaglandin E2(out) + glutarate(in) = prostaglandin E2(in) + glutarate(out). It catalyses the reaction urate(in) + glutarate(out) = urate(out) + glutarate(in). The enzyme catalyses taurocholate(out) + 2-oxoglutarate(in) = taurocholate(in) + 2-oxoglutarate(out). The catalysed reaction is dehydroepiandrosterone 3-sulfate(out) + 2-oxoglutarate(in) = dehydroepiandrosterone 3-sulfate(in) + 2-oxoglutarate(out). It carries out the reaction kynurenate(out) + a dicarboxylate(in) = kynurenate(in) + a dicarboxylate(out). It catalyses the reaction (indol-3-yl)acetate(out) + a dicarboxylate(in) = (indol-3-yl)acetate(in) + a dicarboxylate(out). The enzyme catalyses indoxyl sulfate(out) + a dicarboxylate(in) = indoxyl sulfate(in) + a dicarboxylate(out). The catalysed reaction is N-benzoylglycine(out) + a dicarboxylate(in) = N-benzoylglycine(in) + a dicarboxylate(out). It carries out the reaction 3-carboxy-4-methyl-5-propyl-2-furanpropanoate(out) + a dicarboxylate(in) = 3-carboxy-4-methyl-5-propyl-2-furanpropanoate(in) + a dicarboxylate(out). It catalyses the reaction (6R)-L-erythro-5,6,7,8-tetrahydrobiopterin(out) + a dicarboxylate(in) = (6R)-L-erythro-5,6,7,8-tetrahydrobiopterin(in) + a dicarboxylate(out). The enzyme catalyses L-erythro-7,8-dihydrobiopterin(out) + a dicarboxylate(in) = L-erythro-7,8-dihydrobiopterin(in) + a dicarboxylate(out). The catalysed reaction is L-sepiapterin(out) + a dicarboxylate(in) = L-sepiapterin(in) + a dicarboxylate(out). Functions as an organic anion/dicarboxylate exchanger that couples organic anion uptake indirectly to the sodium gradient. Transports organic anions such as estrone 3-sulfate (E1S) and urate in exchange for dicarboxylates such as glutarate or ketoglutarate (2-oxoglutarate). Plays an important role in the excretion of endogenous and exogenous organic anions, especially from the kidney and the brain. E1S transport is pH- and chloride-dependent and may also involve E1S/cGMP exchange. Responsible for the transport of prostaglandin E2 (PGE2) and prostaglandin F2(alpha) (PGF2(alpha)) in the basolateral side of the renal tubule. Involved in the transport of neuroactive tryptophan metabolites kynurenate and xanthurenate. Functions as a biopterin transporters involved in the uptake and the secretion of coenzymes tetrahydrobiopterin (BH4), dihydrobiopterin (BH2) and sepiapterin to urine, thereby determining baseline levels of blood biopterins. May be involved in the basolateral transport of steviol, a metabolite of the popular sugar substitute stevioside. May participate in the detoxification/ renal excretion of drugs and xenobiotics, such as the histamine H(2)-receptor antagonists fexofenadine and cimetidine, the antibiotic benzylpenicillin (PCG), the anionic herbicide 2,4-dichloro-phenoxyacetate (2,4-D), the diagnostic agent p-aminohippurate (PAH), the antiviral acyclovir (ACV), and the mycotoxin ochratoxin (OTA), by transporting these exogenous organic anions across the cell membrane in exchange for dicarboxylates such as 2-oxoglutarate. Contributes to the renal uptake of potent uremic toxins (indoxyl sulfate (IS), indole acetate (IA), hippurate/N-benzoylglycine (HA) and 3-carboxy-4-methyl-5-propyl-2-furanpropionate (CMPF)), pravastatin, PCG, E1S and dehydroepiandrosterone sulfate (DHEAS), and is partly involved in the renal uptake of temocaprilat (an angiotensin-converting enzyme (ACE) inhibitor). May contribute to the release of cortisol in the adrenals. Involved in one of the detoxification systems on the choroid plexus (CP), removes substrates such as E1S or taurocholate (TC), PCG, 2,4-D and PAH, from the cerebrospinal fluid (CSF) to the blood for eventual excretion in urine and bile. Regulates the CSF concentration of histamine H(2)-receptor antagonists cimetidine and ranitidine at the CP. Also contributes to the uptake of several other organic compounds such as the prostanoids prostaglandin E(2) and prostaglandin F(2-alpha), L-carnitine, and the therapeutic drugs allopurinol, 6-mercaptopurine (6-MP) and 5-fluorouracil (5-FU). Mediates the uptake from brain of organic anions, such as E1S, PAH, and OTA. Mediates the transport of PAH, PCG, and the statins pravastatin and pitavastatin, from the cerebrum into the blood circulation across the blood-brain barrier (BBB). In summary, plays a role in the efflux of drugs and xenobiotics, helping reduce their undesired toxicological effects on the body. This chain is Organic anion transporter 3 (Slc22a8), found in Rattus norvegicus (Rat).